The sequence spans 21 residues: Glucan endo-1,3-beta-glucosidase 2 (21 aa).

The tract at residues 1–21 (APGDLLWSDEFDGAAGSAPNP) is disordered.

It catalyses the reaction Hydrolysis of (1-&gt;3)-beta-D-glucosidic linkages in (1-&gt;3)-beta-D-glucans.. The polypeptide is Glucan endo-1,3-beta-glucosidase 2 (Papiliotrema laurentii (Cryptococcus laurentii)).